The following is a 644-amino-acid chain: Chaperone protein DnaK (644 aa).

Threonine 199 carries the phosphothreonine; by autocatalysis modification. Residues 603–644 are disordered; it reads YAKKSSEGQAAQGQTQSQESTKPAEEGVVDAEFEEVKEEDKK. The segment covering 609–623 has biased composition (polar residues); it reads EGQAAQGQTQSQEST. Positions 629-644 are enriched in acidic residues; sequence GVVDAEFEEVKEEDKK.

This sequence belongs to the heat shock protein 70 family.

Acts as a chaperone. The sequence is that of Chaperone protein DnaK from Legionella pneumophila (strain Corby).